Here is a 553-residue protein sequence, read N- to C-terminus: CTP synthase (553 aa).

The interval 1–270 is amidoligase domain; the sequence is MTKYVFVTGG…DELICEELKL (270 aa). Serine 13 contributes to the CTP binding site. Serine 13 contacts UTP. ATP contacts are provided by residues 14–19 and aspartate 71; that span reads SLGKGI. Residues aspartate 71 and glutamate 144 each coordinate Mg(2+). Residues 151-153, 191-196, and lysine 227 each bind CTP; these read DIE and KTKPTQ. UTP-binding positions include 191–196 and lysine 227; that span reads KTKPTQ. The Glutamine amidotransferase type-1 domain occupies 295-547; it reads TIGMVGKYVE…VEAARAHHEA (253 aa). Glycine 356 contributes to the L-glutamine binding site. The active-site Nucleophile; for glutamine hydrolysis is the cysteine 383. Residues 384–387, glutamate 407, and arginine 473 contribute to the L-glutamine site; that span reads LGMQ. Active-site residues include histidine 520 and glutamate 522.

It belongs to the CTP synthase family. Homotetramer.

The catalysed reaction is UTP + L-glutamine + ATP + H2O = CTP + L-glutamate + ADP + phosphate + 2 H(+). The enzyme catalyses L-glutamine + H2O = L-glutamate + NH4(+). It catalyses the reaction UTP + NH4(+) + ATP = CTP + ADP + phosphate + 2 H(+). Its pathway is pyrimidine metabolism; CTP biosynthesis via de novo pathway; CTP from UDP: step 2/2. With respect to regulation, allosterically activated by GTP, when glutamine is the substrate; GTP has no effect on the reaction when ammonia is the substrate. The allosteric effector GTP functions by stabilizing the protein conformation that binds the tetrahedral intermediate(s) formed during glutamine hydrolysis. Inhibited by the product CTP, via allosteric rather than competitive inhibition. Its function is as follows. Catalyzes the ATP-dependent amination of UTP to CTP with either L-glutamine or ammonia as the source of nitrogen. Regulates intracellular CTP levels through interactions with the four ribonucleotide triphosphates. The protein is CTP synthase of Paraburkholderia phymatum (strain DSM 17167 / CIP 108236 / LMG 21445 / STM815) (Burkholderia phymatum).